A 131-amino-acid polypeptide reads, in one-letter code: Leptin receptor gene-related protein (131 aa).

Helical transmembrane passes span 7–27, 32–52, 69–89, and 100–120; these read LVAL…GCAL, VYWP…HFIA, LAYF…VILA, and GLVL…FLIF.

It belongs to the OB-RGRP/VPS55 family. In terms of assembly, interacts with LEPR. Interacts with RAB13. Expressed at the highest levels in heart and placenta and at a lesser extent in lung, liver, skeletal muscle, kidney and pancreas.

It localises to the golgi apparatus membrane. The protein localises to the endosome membrane. Functionally, negatively regulates leptin receptor (LEPR) cell surface expression, and thus decreases response to leptin. Negatively regulates growth hormone (GH) receptor cell surface expression in liver. May play a role in liver resistance to GH during periods of reduced nutrient availability. The sequence is that of Leptin receptor gene-related protein (LEPROT) from Homo sapiens (Human).